We begin with the raw amino-acid sequence, 215 residues long: S-crystallin 3 (215 aa).

Positions 2 to 80 (PSYTLHYFNH…YLAREFGYHG (79 aa)) constitute a GST N-terminal domain. Residues 82–215 (SNMEMARVDF…YLKKRCRTDF (134 aa)) form the GST C-terminal domain.

The protein belongs to the GST superfamily. Lens.

Its function is as follows. S-crystallins are structural components of squids and octopi eye lens. Contains relatively little if any GST activity. The chain is S-crystallin 3 from Enteroctopus dofleini (North Pacific giant octopus).